The chain runs to 369 residues: Anhydro-N-acetylmuramic acid kinase (369 aa).

Residue 12–19 (GTSMDGVD) coordinates ATP.

This sequence belongs to the anhydro-N-acetylmuramic acid kinase family.

The enzyme catalyses 1,6-anhydro-N-acetyl-beta-muramate + ATP + H2O = N-acetyl-D-muramate 6-phosphate + ADP + H(+). The protein operates within amino-sugar metabolism; 1,6-anhydro-N-acetylmuramate degradation. Its pathway is cell wall biogenesis; peptidoglycan recycling. In terms of biological role, catalyzes the specific phosphorylation of 1,6-anhydro-N-acetylmuramic acid (anhMurNAc) with the simultaneous cleavage of the 1,6-anhydro ring, generating MurNAc-6-P. Is required for the utilization of anhMurNAc either imported from the medium or derived from its own cell wall murein, and thus plays a role in cell wall recycling. The protein is Anhydro-N-acetylmuramic acid kinase of Shewanella baltica (strain OS223).